The sequence spans 151 residues: Transcriptional repressor NrdR (151 aa).

A zinc finger spans residues 3–34 (CPFCNSVDTSVKNSRPSDCKMSVRRRRSCDSC). Residues 49-139 (VKVLKKDGSV…VYMNFSDVND (91 aa)) form the ATP-cone domain.

It belongs to the NrdR family. Zn(2+) serves as cofactor.

Negatively regulates transcription of bacterial ribonucleotide reductase nrd genes and operons by binding to NrdR-boxes. In Anaplasma marginale (strain Florida), this protein is Transcriptional repressor NrdR.